The following is a 35-amino-acid chain: Photosystem II reaction center protein T (35 aa).

Residues 3 to 23 (ALVYTFLLVGTLGIIFFAIFF) form a helical membrane-spanning segment.

It belongs to the PsbT family. PSII is composed of 1 copy each of membrane proteins PsbA, PsbB, PsbC, PsbD, PsbE, PsbF, PsbH, PsbI, PsbJ, PsbK, PsbL, PsbM, PsbT, PsbY, PsbZ, Psb30/Ycf12, at least 3 peripheral proteins of the oxygen-evolving complex and a large number of cofactors. It forms dimeric complexes.

The protein localises to the plastid. Its subcellular location is the chloroplast thylakoid membrane. Its function is as follows. Found at the monomer-monomer interface of the photosystem II (PS II) dimer, plays a role in assembly and dimerization of PSII. PSII is a light-driven water plastoquinone oxidoreductase, using light energy to abstract electrons from H(2)O, generating a proton gradient subsequently used for ATP formation. This is Photosystem II reaction center protein T from Chara vulgaris (Common stonewort).